The chain runs to 152 residues: Mediator of RNA polymerase II transcription subunit 9 (152 aa).

Residues 98–150 adopt a coiled-coil conformation; sequence IKRCKALLQENEEVRNLLANSIEEWENIIADKEQQLRVKAKVLRDLDARIEKI.

This sequence belongs to the Mediator complex subunit 9 family. Component of the Mediator complex.

It localises to the nucleus. Component of the Mediator complex, a coactivator involved in the regulated transcription of nearly all RNA polymerase II-dependent genes. Mediator functions as a bridge to convey information from gene-specific regulatory proteins to the basal RNA polymerase II transcription machinery. Mediator is recruited to promoters by direct interactions with regulatory proteins and serves as a scaffold for the assembly of a functional preinitiation complex with RNA polymerase II and the general transcription factors. The polypeptide is Mediator of RNA polymerase II transcription subunit 9 (CSE2) (Candida glabrata (strain ATCC 2001 / BCRC 20586 / JCM 3761 / NBRC 0622 / NRRL Y-65 / CBS 138) (Yeast)).